The primary structure comprises 43 residues: Protein PsbN (43 aa).

A helical membrane pass occupies residues 4-24 (GILVVIFISCLLVSFTGYTIY).

The protein belongs to the PsbN family.

It is found in the plastid. Its subcellular location is the chloroplast thylakoid membrane. In terms of biological role, may play a role in photosystem I and II biogenesis. The sequence is that of Protein PsbN from Chaetosphaeridium globosum (Charophycean green alga).